Reading from the N-terminus, the 340-residue chain is Selenide, water dikinase (340 aa).

Selenocysteine 17 is an active-site residue. Position 17 (selenocysteine 17) is a non-standard amino acid, selenocysteine. ATP-binding positions include lysine 20 and 45-47; that span reads NNE. Aspartate 48 contributes to the Mg(2+) binding site. ATP-binding positions include aspartate 65, aspartate 88, and 136 to 138; that span reads GHT. Aspartate 88 contacts Mg(2+). Position 224 (aspartate 224) interacts with Mg(2+).

This sequence belongs to the selenophosphate synthase 1 family. Class I subfamily. Homodimer. Requires Mg(2+) as cofactor.

The enzyme catalyses hydrogenselenide + ATP + H2O = selenophosphate + AMP + phosphate + 2 H(+). In terms of biological role, synthesizes selenophosphate from selenide and ATP. In Campylobacter jejuni (strain RM1221), this protein is Selenide, water dikinase.